A 92-amino-acid polypeptide reads, in one-letter code: C-C motif chemokine 3 (92 aa).

The signal sequence occupies residues 1–23; that stretch reads MQVSTAALAVLLCTMALCNQFSA. 2 disulfide bridges follow: C33/C57 and C34/C73.

This sequence belongs to the intercrine beta (chemokine CC) family. In terms of assembly, self-associates. Also heterodimer of MIP-1-alpha(4-69) and MIP-1-beta(3-69). Interacts with CCR1. In terms of processing, N-terminal processed form LD78-alpha(4-69) is produced by proteolytic cleavage after secretion from HTLV1-transformed T-cells.

The protein localises to the secreted. Its function is as follows. Monokine with inflammatory and chemokinetic properties. Binds to CCR1, CCR4 and CCR5. One of the major HIV-suppressive factors produced by CD8+ T-cells. Recombinant MIP-1-alpha induces a dose-dependent inhibition of different strains of HIV-1, HIV-2, and simian immunodeficiency virus (SIV). The chain is C-C motif chemokine 3 (CCL3) from Homo sapiens (Human).